The following is a 338-amino-acid chain: MLTERQLLILQTIIDDFIGSAQPVGSRTLAKKDAITFSSATIRNEMADLEELGFIEKTHSSSGRVPSEKGYRFYVDHLLAPQNLPKDEIVQIKDLFAERIFEAEKIAQQSAQILSELTNYTAIVLGPKLSTNKLKNVQIVPLDRQTAVAIIVTDTGHVQSKTITVPESVDLSDLEKMVNILNEKLSGVPMSELHNKIFKEIVTVLRGYVHNYDSAIKMLDGTFQVPLSEKIYFGGKANMLSQPEFHDIHKVRSLLTMIDNEAEFYDILRHKQVGIQVKIGRENSATAMEDCSLISATYSIGEEQLGTIAILGPTRMQYSRVISLLQLFTRQFTDGLKK.

It belongs to the HrcA family.

Negative regulator of class I heat shock genes (grpE-dnaK-dnaJ and groELS operons). Prevents heat-shock induction of these operons. The polypeptide is Heat-inducible transcription repressor HrcA (Bacillus cereus (strain 03BB102)).